A 273-amino-acid chain; its full sequence is WIMGHMVNAIYQTDEFVNLGANSIETDVSFDDNANPEYTYHGIPCDCGRSCLKWENYNDFLKGLRSATTPGNSKYQSKLILVVFDLKTGSLYDNQASEAGKKLAKNLLKHYWNNGNNGGRAYIVLSIPDLNHYPLIKGFTDTLKQEGHPELLEKVGYDFSGNDAVGDVAKAYKKAGVSGHVWQSDGITNCLLRGLTRVKEAVANRDSGNGYINKVYYWTVDKRATTRDALDAGVDGVMTNYPDVIADVMNEAAYKNKVRLATYEDSPWVTFKK.

Histidine 5 is a catalytic residue. Mg(2+) is bound by residues glutamate 25 and aspartate 27. The active-site Nucleophile is histidine 41. 2 disulfide bridges follow: cysteine 45–cysteine 51 and cysteine 47–cysteine 190. Aspartate 85 contributes to the Mg(2+) binding site.

The protein belongs to the arthropod phospholipase D family. Class II subfamily. Mg(2+) serves as cofactor. Expressed by the venom gland.

The protein localises to the secreted. The catalysed reaction is an N-(acyl)-sphingosylphosphocholine = an N-(acyl)-sphingosyl-1,3-cyclic phosphate + choline. It catalyses the reaction an N-(acyl)-sphingosylphosphoethanolamine = an N-(acyl)-sphingosyl-1,3-cyclic phosphate + ethanolamine. It carries out the reaction a 1-acyl-sn-glycero-3-phosphocholine = a 1-acyl-sn-glycero-2,3-cyclic phosphate + choline. The enzyme catalyses a 1-acyl-sn-glycero-3-phosphoethanolamine = a 1-acyl-sn-glycero-2,3-cyclic phosphate + ethanolamine. In terms of biological role, dermonecrotic toxins cleave the phosphodiester linkage between the phosphate and headgroup of certain phospholipids (sphingolipid and lysolipid substrates), forming an alcohol (often choline) and a cyclic phosphate. This toxin acts on sphingomyelin (SM). It may also act on ceramide phosphoethanolamine (CPE), lysophosphatidylcholine (LPC) and lysophosphatidylethanolamine (LPE), but not on lysophosphatidylserine (LPS), and lysophosphatidylglycerol (LPG). It acts by transphosphatidylation, releasing exclusively cyclic phosphate products as second products. Induces dermonecrosis, hemolysis, increased vascular permeability, edema, inflammatory response, and platelet aggregation. The chain is Dermonecrotic toxin LhSicTox-alphaIA2avii from Loxosceles hirsuta (Recluse spider).